Consider the following 520-residue polypeptide: O-methyltransferase cicE (520 aa).

Residues 300-301, D323, 355-356, and R371 each bind S-adenosyl-L-methionine; these read GG and NF.

The protein belongs to the class I-like SAM-binding methyltransferase superfamily. Cation-independent O-methyltransferase family.

It functions in the pathway phytotoxin biosynthesis. Functionally, O-methyltransferase; part of the gene cluster that mediates the biosynthesis of cichorine, a phytotoxin active against knapweed, corn, and soybeans. The first step in the pathway is performed by the non-reducing polyketide synthase pkbA that condenses one acetyl-CoA starter unit with 3 malonyl-CoA units. PkbA also catalyzes one methylation step to produce 3-methylorsellinate. The nonribosomal peptide synthase-like protein cicB, the cytochrome P450 monooxygenase cicH and the O-methyltransferase cicE are involved in the conversion of 3-methylorsellinate into nidulol. CicB converts 3-methylorsellinate to a yet unidentified intermediate, cicH may play a ring-closing role for cichorine and cicE is plausibly responsible for the methylation of one of the phenol groups. The oxidoreductase cicC acts downstream with still unidentified enzymes to further convert nidulol into cichorine. This is O-methyltransferase cicE from Emericella nidulans (strain FGSC A4 / ATCC 38163 / CBS 112.46 / NRRL 194 / M139) (Aspergillus nidulans).